The following is a 108-amino-acid chain: Hydrogenase expression/formation protein HupN (108 aa).

The tract at residues 88–108 is disordered; that stretch reads REPQLPPHLQAQLPPKEPNSP.

It belongs to the HupF/HypC family.

The sequence is that of Hydrogenase expression/formation protein HupN (hupN) from Azotobacter chroococcum mcd 1.